The primary structure comprises 465 residues: Chromosomal replication initiator protein DnaA (465 aa).

Residues 1–84 (MSLSLWQQCL…RFEVGSKPLV (84 aa)) are domain I, interacts with DnaA modulators. Residues 84–128 (VQAISQPAQPHHKQVSAAPQQQVRSAPVRPSWDNSPAQAEHTYRS) are domain II. The interval 91–120 (AQPHHKQVSAAPQQQVRSAPVRPSWDNSPA) is disordered. Positions 129-345 (NVNPKHTFDN…GALNRVIANA (217 aa)) are domain III, AAA+ region. Glycine 173, glycine 175, lysine 176, and threonine 177 together coordinate ATP. Residues 346-465 (NFTGRSITID…FSNLIRTLSS (120 aa)) form a domain IV, binds dsDNA region.

This sequence belongs to the DnaA family. As to quaternary structure, oligomerizes as a right-handed, spiral filament on DNA at oriC.

It localises to the cytoplasm. Its function is as follows. Plays an essential role in the initiation and regulation of chromosomal replication. ATP-DnaA binds to the origin of replication (oriC) to initiate formation of the DNA replication initiation complex once per cell cycle. Binds the DnaA box (a 9 base pair repeat at the origin) and separates the double-stranded (ds)DNA. Forms a right-handed helical filament on oriC DNA; dsDNA binds to the exterior of the filament while single-stranded (ss)DNA is stabiized in the filament's interior. The ATP-DnaA-oriC complex binds and stabilizes one strand of the AT-rich DNA unwinding element (DUE), permitting loading of DNA polymerase. After initiation quickly degrades to an ADP-DnaA complex that is not apt for DNA replication. Binds acidic phospholipids. In Pectobacterium carotovorum subsp. carotovorum (strain PC1), this protein is Chromosomal replication initiator protein DnaA.